A 347-amino-acid chain; its full sequence is 3-isopropylmalate dehydrogenase (347 aa).

R94, R104, R128, and D219 together coordinate substrate. Mg(2+) contacts are provided by D219, D243, and D247. 279 to 291 provides a ligand contact to NAD(+); the sequence is GSAPDIAGQGKAD.

This sequence belongs to the isocitrate and isopropylmalate dehydrogenases family. LeuB type 2 subfamily. In terms of assembly, homodimer. The cofactor is Mg(2+). It depends on Mn(2+) as a cofactor.

It localises to the cytoplasm. The catalysed reaction is (2R,3S)-3-isopropylmalate + NAD(+) = 4-methyl-2-oxopentanoate + CO2 + NADH. Its pathway is amino-acid biosynthesis; L-leucine biosynthesis; L-leucine from 3-methyl-2-oxobutanoate: step 3/4. Catalyzes the oxidation of 3-carboxy-2-hydroxy-4-methylpentanoate (3-isopropylmalate) to 3-carboxy-4-methyl-2-oxopentanoate. The product decarboxylates to 4-methyl-2 oxopentanoate. This Streptomyces griseus subsp. griseus (strain JCM 4626 / CBS 651.72 / NBRC 13350 / KCC S-0626 / ISP 5235) protein is 3-isopropylmalate dehydrogenase.